A 620-amino-acid chain; its full sequence is Hemagglutinin glycoprotein (620 aa).

Over Met-1–Val-37 the chain is Intravirion. The interval Met-1 to Cys-154 is stalk. The chain crosses the membrane as a helical; Signal-anchor for type II membrane protein span at residues Leu-38–Ile-58. Residues Arg-59–Cys-620 lie on the Virion surface side of the membrane. 5 N-linked (GlcNAc...) asparagine; by host glycosylation sites follow: Asn-168, Asn-187, Asn-200, Asn-215, and Asn-238. Disulfide bonds link Cys-188/Cys-606, Cys-287/Cys-300, Cys-381/Cys-494, Cys-386/Cys-394, and Cys-570/Cys-579. The segment at Pro-458–Tyr-543 is interaction with host NECTIN4 receptor.

This sequence belongs to the paramyxoviruses hemagglutinin-neuraminidase family. Non-sialidase subfamily. As to quaternary structure, homodimer; disulfide-linked. Further forms homotetramer (dimer of dimers). Interacts (via C-terminus) with human NECTIN4 (via N-terminus); this interaction allows attachment to the respiratory epithelium and viral entry. Interacts (via C-terminus) with human SLAMF1/CD150 (via N-terminus); this interaction allows attachment and viral entry into the CD150-expressing immune cells.

Its subcellular location is the virion membrane. It is found in the host cell membrane. Functionally, attaches the virus to the human SLAMF1/CD150 receptor for entry into host dendritic cells, macrophages, activated memory T cells and naive or memory B cells, thereby explaining the long immunosuppression that follows infection. In the respiratory airways, binds to the NECTIN4 receptor for entry into the host cell. Binding of H protein to the receptor induces a conformational change that allows the F protein to trigger virion/cell membranes fusion. This is Hemagglutinin glycoprotein (H) from Homo sapiens (Human).